Here is a 48-residue protein sequence, read N- to C-terminus: Hemoglobin subunit beta-B (48 aa).

One can recognise a Globin domain in the interval 2 to 48; sequence EWTDAERGAILSLWGKIDPDELGPALLARXXLVYXXTQRYFASFGDL.

Belongs to the globin family. In terms of assembly, heterotetramer of two alpha chains and two beta chains. As to expression, red blood cells.

Involved in oxygen transport from gills to the various peripheral tissues. In Catostomus clarkii (Desert sucker), this protein is Hemoglobin subunit beta-B.